The following is a 364-amino-acid chain: Protein FAM81A (364 aa).

Residues 80 to 107 are a coiled coil; that stretch reads IRNITAIVKQLNRDIEVLQEQIRARDNI. The segment covering 275–300 has biased composition (basic and acidic residues); it reads ARLDKIEESQRRNAEGQRKPEEEKVH. A disordered region spans residues 275–301; it reads ARLDKIEESQRRNAEGQRKPEEEKVHG.

The protein belongs to the FAM81 family. In terms of assembly, interacts with DLG4/PSD-95, GRIN2B/GLUN2B and SYNGAP1; the interactions facilitate condensate formation. Highly expressed in brain (at protein level).

It localises to the postsynaptic density. The protein localises to the cytoplasm. In terms of biological role, facilitates the interaction and assembly of proteins within the postsynaptic density by promoting the condensation of postsynaptic proteins via liquid-liquid phase separation. Required for neuronal activity. Accumulation at the postsynaptic density results in enlargement of dendritic spines. The sequence is that of Protein FAM81A from Rattus norvegicus (Rat).